Here is a 317-residue protein sequence, read N- to C-terminus: Ribosomal RNA large subunit methyltransferase F (317 aa).

The protein belongs to the methyltransferase superfamily. METTL16/RlmF family.

Its subcellular location is the cytoplasm. The enzyme catalyses adenosine(1618) in 23S rRNA + S-adenosyl-L-methionine = N(6)-methyladenosine(1618) in 23S rRNA + S-adenosyl-L-homocysteine + H(+). Functionally, specifically methylates the adenine in position 1618 of 23S rRNA. This Pseudomonas putida (strain ATCC 47054 / DSM 6125 / CFBP 8728 / NCIMB 11950 / KT2440) protein is Ribosomal RNA large subunit methyltransferase F.